The following is a 256-amino-acid chain: CD209 antigen-like protein 2 (256 aa).

At 1–50 the chain is on the cytoplasmic side; it reads MSDSKEPRAQPLGLLEEEELITSSMNFFPRDFGFRQTRGYKSLAGCLGHA. Positions 14 to 15 match the Endocytosis signal motif; the sequence is LL. A helical; Signal-anchor for type II membrane protein transmembrane segment spans residues 51–71; the sequence is PLVLPLLFFTLFTGLLVAILV. The Extracellular segment spans residues 72–240; the sequence is QVSKNPSSQR…KSAASCSRDE (169 aa). Cystine bridges form between cysteine 108-cysteine 119, cysteine 136-cysteine 229, and cysteine 208-cysteine 221. One can recognise a C-type lectin domain in the interval 114–230; sequence FFQGNCYFIS…CSAAKFWICK (117 aa). 6 residues coordinate Ca(2+): glutamate 199, asparagine 201, isoleucine 203, glutamate 206, asparagine 217, and aspartate 218.

As to expression, predominantly expressed in liver and axillary lymph nodes. At very low levels also found in other tissues.

It is found in the membrane. In terms of biological role, probable pathogen-recognition receptor involved in peripheral immune surveillance in liver. May mediate the endocytosis of pathogens which are subsequently degraded in lysosomal compartments. Probably recognizes in a calcium-dependent manner high mannose N-linked oligosaccharides in a variety of pathogen antigens. Is a receptor for ICAM3, probably by binding to mannose-like carbohydrates. This chain is CD209 antigen-like protein 2 (CD209L2), found in Macaca mulatta (Rhesus macaque).